Consider the following 346-residue polypeptide: Zinc transporter YKE4 (346 aa).

The Extracellular segment spans residues Met-1–Lys-2. Residues Ala-3–His-23 traverse the membrane as a helical segment. Over His-24 to Ala-69 the chain is Cytoplasmic. A helical membrane pass occupies residues Ile-70–Leu-90. The Extracellular segment spans residues Arg-91 to Thr-99. The chain crosses the membrane as a helical span at residues Leu-100–Ile-120. Residues Pro-121 to Gly-126 lie on the Cytoplasmic side of the membrane. The helical transmembrane segment at Val-127–Leu-147 threads the bilayer. The Extracellular segment spans residues Asp-148 to Gly-202. Asn-184 is a glycosylation site (N-linked (GlcNAc...) asparagine). The chain crosses the membrane as a helical span at residues Ile-203–Val-223. Topologically, residues Thr-224–Gln-252 are cytoplasmic. The chain crosses the membrane as a helical span at residues Ala-253 to Gly-273. 2 N-linked (GlcNAc...) asparagine glycosylation sites follow: Asn-274 and Asn-285. The Extracellular segment spans residues Asn-274–Met-290. The chain crosses the membrane as a helical span at residues Leu-291 to Leu-311. The Cytoplasmic portion of the chain corresponds to His-312–Glu-322. The helical transmembrane segment at Phe-323–Met-343 threads the bilayer. The Extracellular portion of the chain corresponds to Asp-344 to His-346.

The protein belongs to the ZIP transporter (TC 2.A.5) family. KE4/Catsup subfamily.

The protein localises to the endoplasmic reticulum membrane. Zinc transporter whose role depends on the zinc status of the cells. It helps to balance zinc levels between the cytosol and the secretory pathway. It transports zinc into the secretory pathway in a zinc-adequate environment and in a high zinc medium. In high zinc medium, transport of zinc into the secretory pathway is a way to eliminate zinc from the cytosol. Under low cytosolic zinc conditions, it removes zinc from the secretory pathway and acts as a zinc importer that helps to alleviate ER stress. In Saccharomyces cerevisiae (strain ATCC 204508 / S288c) (Baker's yeast), this protein is Zinc transporter YKE4 (YKE4).